We begin with the raw amino-acid sequence, 894 residues long: Nitrate reductase [NADPH] (894 aa).

The segment at 1–79 is disordered; the sequence is MAVKSQLGVT…PEDLKTPDHR (79 aa). Residues 7–16 are compositionally biased toward polar residues; that stretch reads LGVTYTTKTF. The segment covering 69–79 has biased composition (basic and acidic residues); it reads LPEDLKTPDHR. A Mo-molybdopterin-binding site is contributed by Cys-169. A Cytochrome b5 heme-binding domain is found at 535–610; sequence VRIISLEELK…MPQYHIGTLN (76 aa). His-570 and His-593 together coordinate heme. The FAD-binding FR-type domain occupies 638–749; sequence KYWSKAILET…KGPVGKFEYL (112 aa). Residues 692 to 695, 709 to 713, 723 to 725, Ser-773, and Thr-776 contribute to the FAD site; these read RAYT, LIKIY, and KMT.

It belongs to the nitrate reductase family. As to quaternary structure, homodimer. Requires FAD as cofactor. Heme serves as cofactor. It depends on Mo-molybdopterin as a cofactor.

The catalysed reaction is nitrite + NADP(+) + H2O = nitrate + NADPH + H(+). Functionally, nitrate reductase is a key enzyme involved in the first step of nitrate assimilation in plants, fungi and bacteria. This chain is Nitrate reductase [NADPH] (NIA), found in Beauveria bassiana (White muscardine disease fungus).